The primary structure comprises 1178 residues: DNA-directed RNA polymerase I subunit 2 (1178 aa).

A C4-type zinc finger spans residues 1097–1137 (CSLCGSLLTSSVVNVQQKKLIQEIGKLPPGRTPKKVTCYSC).

Belongs to the RNA polymerase beta chain family. In terms of assembly, component of the RNA polymerase I (Pol I) complex consisting of at least 13 subunits.

Its subcellular location is the nucleus. It catalyses the reaction RNA(n) + a ribonucleoside 5'-triphosphate = RNA(n+1) + diphosphate. In terms of biological role, DNA-dependent RNA polymerase catalyzes the transcription of DNA into RNA using the four ribonucleoside triphosphates as substrates. Second largest core component of RNA polymerase I which synthesizes ribosomal RNA precursors. Proposed to contribute to the polymerase catalytic activity and forms the polymerase active center together with the largest subunit. Pol I is composed of mobile elements and NRPA2 is part of the core element with the central large cleft and probably a clamp element that moves to open and close the cleft. Essential for the completion of the three rounds of mitosis in female megaspores required for the development of mature gametophytes. The sequence is that of DNA-directed RNA polymerase I subunit 2 from Arabidopsis thaliana (Mouse-ear cress).